The sequence spans 369 residues: Phosphatidylglycerol--prolipoprotein diacylglyceryl transferase (369 aa).

3 consecutive transmembrane segments (helical) span residues 26 to 46 (YYGI…ILTL), 60 to 80 (YVFI…FIIG), and 97 to 117 (LAIQ…FFFI). An a 1,2-diacyl-sn-glycero-3-phospho-(1'-sn-glycerol)-binding site is contributed by R167. Helical transmembrane passes span 216 to 236 (VPIF…IVFL) and 273 to 293 (FVTS…GFIF).

It belongs to the Lgt family.

Its subcellular location is the cell membrane. The enzyme catalyses L-cysteinyl-[prolipoprotein] + a 1,2-diacyl-sn-glycero-3-phospho-(1'-sn-glycerol) = an S-1,2-diacyl-sn-glyceryl-L-cysteinyl-[prolipoprotein] + sn-glycerol 1-phosphate + H(+). It functions in the pathway protein modification; lipoprotein biosynthesis (diacylglyceryl transfer). Functionally, catalyzes the transfer of the diacylglyceryl group from phosphatidylglycerol to the sulfhydryl group of the N-terminal cysteine of a prolipoprotein, the first step in the formation of mature lipoproteins. The protein is Phosphatidylglycerol--prolipoprotein diacylglyceryl transferase of Mycoplasmoides gallisepticum (strain R(low / passage 15 / clone 2)) (Mycoplasma gallisepticum).